A 198-amino-acid polypeptide reads, in one-letter code: DNA damage response protein D (198 aa).

Residues 124–198 (SAAPTDPAGP…SEAGENTPAA (75 aa)) are disordered. A compositionally biased stretch (basic and acidic residues) spans 136 to 180 (PGTDRAERTAAERTASERATHDRASTERPARPRRSAEPEAVRTED).

Functionally, appears to contribute to D.radiodurans capacity to survive exposure to ionizing radiation. May play a role in DNA repair and genome reconstitution. This chain is DNA damage response protein D (ddrD), found in Deinococcus radiodurans (strain ATCC 13939 / DSM 20539 / JCM 16871 / CCUG 27074 / LMG 4051 / NBRC 15346 / NCIMB 9279 / VKM B-1422 / R1).